We begin with the raw amino-acid sequence, 384 residues long: MSEDFYDVLGVSRDASKDQIKNAYRKKAAKYHPDVSDEEDAEEKFKKVQKAKEVLTDDEKRQMYDQLGHERFQQAQKRGAGGGGGGRGQGNPFGGGGNPFGGMGGGGFEDIFNNLFNGGGGQRRSRPQQGRDVAQRITIDLEDAYHGVERDVTIRRREVCPECDGEGHPADADVNTCSECNGSGQQTTVQQTPFGRVQQTTTCRACGGEGKTYSEDCSECRGSGRVRRTRDVTITIPAGFRDGQRLRYRGEGEPGENGGPNGDLFVEVNVRDHEEFDRDGDDLQYTHPISFPQAVFGATVEVPTLDGEAELKVPAGTQSGSTFTVSGAGMPHLDGRGNGDLHVEIHVVTPEDLNSEQREALKQFAEAGGEEVKESLFQKLKNSL.

The J domain maps to 4–68 (DFYDVLGVSR…EKRQMYDQLG (65 aa)). Disordered stretches follow at residues 74–105 (QAQKRGAGGGGGGRGQGNPFGGGGNPFGGMGG) and 113–132 (NNLFNGGGGQRRSRPQQGRD). Residues 79 to 105 (GAGGGGGGRGQGNPFGGGGNPFGGMGG) show a composition bias toward gly residues. Residues 147-229 (GVERDVTIRR…CRGSGRVRRT (83 aa)) form a CR-type zinc finger. Zn(2+) is bound by residues Cys160, Cys163, Cys177, Cys180, Cys203, Cys206, Cys217, and Cys220. 4 CXXCXGXG motif repeats span residues 160–167 (CPECDGEG), 177–184 (CSECNGSG), 203–210 (CRACGGEG), and 217–224 (CSECRGSG).

This sequence belongs to the DnaJ family. As to quaternary structure, homodimer. Requires Zn(2+) as cofactor.

Its subcellular location is the cytoplasm. Its function is as follows. Participates actively in the response to hyperosmotic and heat shock by preventing the aggregation of stress-denatured proteins and by disaggregating proteins, also in an autonomous, DnaK-independent fashion. Unfolded proteins bind initially to DnaJ; upon interaction with the DnaJ-bound protein, DnaK hydrolyzes its bound ATP, resulting in the formation of a stable complex. GrpE releases ADP from DnaK; ATP binding to DnaK triggers the release of the substrate protein, thus completing the reaction cycle. Several rounds of ATP-dependent interactions between DnaJ, DnaK and GrpE are required for fully efficient folding. Also involved, together with DnaK and GrpE, in the DNA replication of plasmids through activation of initiation proteins. The chain is Chaperone protein DnaJ from Haloferax mediterranei (strain ATCC 33500 / DSM 1411 / JCM 8866 / NBRC 14739 / NCIMB 2177 / R-4) (Halobacterium mediterranei).